Here is a 265-residue protein sequence, read N- to C-terminus: Serine protease 1 (265 aa).

The first 21 residues, 1–21, serve as a signal peptide directing secretion; it reads MKLFVFLALAVAAATAVPAPA. The propeptide occupies 22 to 35; it reads QKLTPTPIKDIQGR. The 227-residue stretch at 36 to 262 folds into the Peptidase S1 domain; that stretch reads ITNGYPAYEG…YLDWIRDNTG (227 aa). C63 and C79 are oxidised to a cystine. Active-site charge relay system residues include H78 and D123. Disulfide bonds link C189-C201 and C211-C239. The active-site Charge relay system is the S215.

The protein belongs to the peptidase S1 family. As to expression, abundantly expressed in the larval gut.

In terms of biological role, major function may be to aid in digestion. The polypeptide is Serine protease 1 (Drosophila melanogaster (Fruit fly)).